The sequence spans 172 residues: Bacilliredoxin SRU_0242 (172 aa).

A disordered region spans residues 141–172 (TDEAPPSDAPSRPDLSSSPNAGGLPSTFQSIS). The span at 154 to 172 (DLSSSPNAGGLPSTFQSIS) shows a compositional bias: polar residues.

Belongs to the bacilliredoxin family.

The sequence is that of Bacilliredoxin SRU_0242 from Salinibacter ruber (strain DSM 13855 / M31).